Reading from the N-terminus, the 361-residue chain is Mitochondrial fission regulator 2 (361 aa).

At Ser137 the chain carries Phosphoserine. 2 disordered regions span residues 191–286 (FIDL…VPNM) and 298–322 (LRPV…EWDP). Positions 219–231 (VLPPPPPPPPPPQ) are enriched in pro residues. The span at 232–244 (FSLQPPSSLPMQP) shows a compositional bias: low complexity. Over residues 250-282 (HDIDSLATEMERQLSGVKKTDDSHHSKSQRLRD) the composition is skewed to basic and acidic residues. Phosphoserine occurs at positions 304 and 340.

This sequence belongs to the MTFR1 family. As to expression, expressed predominantly in testis (at protein level). Expressed to a lower extent in spleen.

Its subcellular location is the mitochondrion. Functionally, may play a role in mitochondrial aerobic respiration essentially in the testis. Can also promote mitochondrial fission. This chain is Mitochondrial fission regulator 2 (Mtfr2), found in Mus musculus (Mouse).